Here is a 24-residue protein sequence, read N- to C-terminus: Positive regulator of RepFIC repA1 expression (24 aa).

This chain is Positive regulator of RepFIC repA1 expression (repL), found in Escherichia coli.